Consider the following 206-residue polypeptide: RNA pyrophosphohydrolase (206 aa).

The region spanning 6 to 149 is the Nudix hydrolase domain; sequence GYRPNVGIVL…KRGVYARALR (144 aa). A Nudix box motif is present at residues 38–59; sequence GGMNTDETPVEAMYRELQEETG. The segment at 175-206 is disordered; that stretch reads MPGHTAGHDRPRKRPRSRGYWPKKAQGDVPPT.

The protein belongs to the Nudix hydrolase family. RppH subfamily. It depends on a divalent metal cation as a cofactor.

Its function is as follows. Accelerates the degradation of transcripts by removing pyrophosphate from the 5'-end of triphosphorylated RNA, leading to a more labile monophosphorylated state that can stimulate subsequent ribonuclease cleavage. In Stenotrophomonas maltophilia (strain R551-3), this protein is RNA pyrophosphohydrolase.